Consider the following 241-residue polypeptide: Small ribosomal subunit protein uS2 (241 aa).

This sequence belongs to the universal ribosomal protein uS2 family.

This is Small ribosomal subunit protein uS2 from Klebsiella pneumoniae (strain 342).